The following is a 608-amino-acid chain: Threonine--tRNA ligase (608 aa).

The interval 1-144 (MRILLIHSDY…SRTITAEEEE (144 aa)) is editing domain. Residues 195-489 (PHVKLMREKE…ELDEKAPMLP (295 aa)) form a catalytic region. C286, H338, and H459 together coordinate Zn(2+).

It belongs to the class-II aminoacyl-tRNA synthetase family. In terms of assembly, homodimer. Zn(2+) is required as a cofactor.

It is found in the cytoplasm. The enzyme catalyses tRNA(Thr) + L-threonine + ATP = L-threonyl-tRNA(Thr) + AMP + diphosphate + H(+). Functionally, catalyzes the attachment of threonine to tRNA(Thr) in a two-step reaction: L-threonine is first activated by ATP to form Thr-AMP and then transferred to the acceptor end of tRNA(Thr). Also edits incorrectly charged L-seryl-tRNA(Thr). The sequence is that of Threonine--tRNA ligase from Methanobrevibacter smithii (strain ATCC 35061 / DSM 861 / OCM 144 / PS).